The sequence spans 427 residues: Probable anaerobic glycerol-3-phosphate dehydrogenase subunit B (427 aa).

This sequence belongs to the anaerobic G-3-P dehydrogenase subunit B family. The cofactor is FMN.

The catalysed reaction is a quinone + sn-glycerol 3-phosphate = dihydroxyacetone phosphate + a quinol. It participates in polyol metabolism; glycerol degradation via glycerol kinase pathway; glycerone phosphate from sn-glycerol 3-phosphate (anaerobic route): step 1/1. The polypeptide is Probable anaerobic glycerol-3-phosphate dehydrogenase subunit B (Halobacterium salinarum (strain ATCC 29341 / DSM 671 / R1)).